A 157-amino-acid chain; its full sequence is S-ribosylhomocysteine lyase (157 aa).

Residues H54, H58, and C124 each coordinate Fe cation.

The protein belongs to the LuxS family. In terms of assembly, homodimer. Fe cation is required as a cofactor.

It catalyses the reaction S-(5-deoxy-D-ribos-5-yl)-L-homocysteine = (S)-4,5-dihydroxypentane-2,3-dione + L-homocysteine. Involved in the synthesis of autoinducer 2 (AI-2) which is secreted by bacteria and is used to communicate both the cell density and the metabolic potential of the environment. The regulation of gene expression in response to changes in cell density is called quorum sensing. Catalyzes the transformation of S-ribosylhomocysteine (RHC) to homocysteine (HC) and 4,5-dihydroxy-2,3-pentadione (DPD). The chain is S-ribosylhomocysteine lyase from Oenococcus oeni (strain ATCC BAA-331 / PSU-1).